A 346-amino-acid chain; its full sequence is NADH-ubiquinone oxidoreductase chain 2 (346 aa).

Transmembrane regions (helical) follow at residues 3-23 (PIIF…VMIS), 25-45 (HWLL…PIMM), 67-87 (SMLL…WTVM), 96-116 (MLMT…FWVP), 122-142 (IPLS…MSVL), 145-165 (IFPS…ILIG), 200-220 (TLLN…MFMA), 238-258 (IMTI…PLSG), 273-293 (NSII…YFYM), and 324-344 (FLPT…MLSV).

This sequence belongs to the complex I subunit 2 family. Core subunit of respiratory chain NADH dehydrogenase (Complex I) which is composed of 45 different subunits. Interacts with TMEM242.

Its subcellular location is the mitochondrion inner membrane. The catalysed reaction is a ubiquinone + NADH + 5 H(+)(in) = a ubiquinol + NAD(+) + 4 H(+)(out). Core subunit of the mitochondrial membrane respiratory chain NADH dehydrogenase (Complex I) which catalyzes electron transfer from NADH through the respiratory chain, using ubiquinone as an electron acceptor. Essential for the catalytic activity and assembly of complex I. The protein is NADH-ubiquinone oxidoreductase chain 2 of Bos mutus grunniens (Wild yak).